We begin with the raw amino-acid sequence, 400 residues long: Argininosuccinate synthase (400 aa).

ATP is bound at residue 10–18 (AFSGGLDTT). Tyr87 contacts L-citrulline. Gly117 is a binding site for ATP. Positions 119, 123, and 124 each coordinate L-aspartate. Residue Asn123 coordinates L-citrulline. The L-citrulline site is built by Arg127, Ser173, Ser182, Glu255, and Tyr267.

It belongs to the argininosuccinate synthase family. Type 1 subfamily. As to quaternary structure, homotetramer.

Its subcellular location is the cytoplasm. It carries out the reaction L-citrulline + L-aspartate + ATP = 2-(N(omega)-L-arginino)succinate + AMP + diphosphate + H(+). Its pathway is amino-acid biosynthesis; L-arginine biosynthesis; L-arginine from L-ornithine and carbamoyl phosphate: step 2/3. This is Argininosuccinate synthase from Natronomonas pharaonis (strain ATCC 35678 / DSM 2160 / CIP 103997 / JCM 8858 / NBRC 14720 / NCIMB 2260 / Gabara) (Halobacterium pharaonis).